We begin with the raw amino-acid sequence, 133 residues long: uncharacterized protein (133 aa).

The next 2 helical transmembrane spans lie at 13 to 33 (FLLSVVGSGNSLSILNGLFLS) and 73 to 93 (FGNPLVTSLNIMYSLFYLLLL).

Its subcellular location is the membrane. This is an uncharacterized protein from Saccharomyces cerevisiae (strain ATCC 204508 / S288c) (Baker's yeast).